Here is a 1114-residue protein sequence, read N- to C-terminus: Kinesin-like protein KIN-12B (1114 aa).

The tract at residues 1-119 (MRSLFSSKLS…GGGGGDSGVQ (119 aa)) is disordered. The segment covering 98–107 (SAASPAPEGA) has biased composition (low complexity). The Kinesin motor domain occupies 117-459 (GVQVVVRVRP…LRFAHRAKDI (343 aa)). Residue 197 to 204 (GQTGSGKT) participates in ATP binding. 2 coiled-coil regions span residues 772 to 810 (VLSA…KNQL) and 999 to 1043 (ELLV…DQEV). Positions 1055–1065 (LPSNVVQSPEP) are enriched in polar residues. The disordered stretch occupies residues 1055-1081 (LPSNVVQSPEPSETGPARYDTGGSFGD).

It belongs to the TRAFAC class myosin-kinesin ATPase superfamily. Kinesin family. KIN-12 subfamily.

The protein is Kinesin-like protein KIN-12B of Oryza sativa subsp. japonica (Rice).